We begin with the raw amino-acid sequence, 118 residues long: Large ribosomal subunit protein bL20 (118 aa).

Belongs to the bacterial ribosomal protein bL20 family.

Binds directly to 23S ribosomal RNA and is necessary for the in vitro assembly process of the 50S ribosomal subunit. It is not involved in the protein synthesizing functions of that subunit. In Staphylococcus aureus (strain Mu3 / ATCC 700698), this protein is Large ribosomal subunit protein bL20.